The following is a 70-amino-acid chain: Small ribosomal subunit protein bS21 (70 aa).

The disordered stretch occupies residues 40-70 (KPTAERKRKHAAAVKRHYKRIRSQQLPPRLY). The span at 45–61 (RKRKHAAAVKRHYKRIR) shows a compositional bias: basic residues.

The protein belongs to the bacterial ribosomal protein bS21 family.

The sequence is that of Small ribosomal subunit protein bS21 from Bordetella parapertussis (strain 12822 / ATCC BAA-587 / NCTC 13253).